Reading from the N-terminus, the 170-residue chain is Lipoprotein signal peptidase (170 aa).

The next 4 helical transmembrane spans lie at 11–31 (LSWLWLSLLVLVIDQASKFYF), 41–61 (IVVIPDLFSWTLAYNTGAAFS), 69–89 (WQRWLFALIAIAVSAVLVVWL), and 95–115 (NETWLAIALALVLGGALGNLY). Catalysis depends on residues aspartate 125 and aspartate 144. A helical membrane pass occupies residues 136-156 (YFPAFNFADSAITVGAVMLAL).

It belongs to the peptidase A8 family.

The protein localises to the cell inner membrane. It catalyses the reaction Release of signal peptides from bacterial membrane prolipoproteins. Hydrolyzes -Xaa-Yaa-Zaa-|-(S,diacylglyceryl)Cys-, in which Xaa is hydrophobic (preferably Leu), and Yaa (Ala or Ser) and Zaa (Gly or Ala) have small, neutral side chains.. It functions in the pathway protein modification; lipoprotein biosynthesis (signal peptide cleavage). This protein specifically catalyzes the removal of signal peptides from prolipoproteins. The sequence is that of Lipoprotein signal peptidase from Pseudomonas fluorescens (strain Pf0-1).